The chain runs to 461 residues: Phosphomethylpyrimidine synthase (461 aa).

Residues N80, M109, Y139, H174, S194–G196, D235–R238, and E274 contribute to the substrate site. H278 serves as a coordination point for Zn(2+). Residue Y301 participates in substrate binding. H342 serves as a coordination point for Zn(2+). Positions 422, 425, and 430 each coordinate [4Fe-4S] cluster.

Belongs to the ThiC family. Homodimer. The cofactor is [4Fe-4S] cluster.

It catalyses the reaction 5-amino-1-(5-phospho-beta-D-ribosyl)imidazole + S-adenosyl-L-methionine = 4-amino-2-methyl-5-(phosphooxymethyl)pyrimidine + CO + 5'-deoxyadenosine + formate + L-methionine + 3 H(+). The protein operates within cofactor biosynthesis; thiamine diphosphate biosynthesis. Catalyzes the synthesis of the hydroxymethylpyrimidine phosphate (HMP-P) moiety of thiamine from aminoimidazole ribotide (AIR) in a radical S-adenosyl-L-methionine (SAM)-dependent reaction. The chain is Phosphomethylpyrimidine synthase from Nautilia profundicola (strain ATCC BAA-1463 / DSM 18972 / AmH).